A 397-amino-acid polypeptide reads, in one-letter code: MEIVGCRAEENTCPFRPPAMLFHGISGGHIQGIMEEMERRSKTESRLAKGGQMNGRETNMPPMSPEKPALCAGCGGKISDRYYLLAVDKQWHLRCLKCCECKLALESELTCFAKDGSIYCKEDYYRRFSVQRCARCHLGISASEMVMRARESVYHLSCFTCTTCNKTLTTGDHFGMKDNLVYCRAHFESLLQGEYPPQLSYTELAAKSGGLALPYFNGTGTVQKGRPRKRKSPALGVDIVNYNSGCNENEADHMDRDQQPYPPSQKTKRMATSFKHHQLRTMKSYFAINHNPDAKDLKQLAQKTGLTKRVLQVWFQNARAKFRRNLLRQENGGVDKADGTSLPAPPSADSGALTPPGTATTLTDLTNPTITVVTSVTSNLDSHEPGSPSQTTLTNLF.

The tract at residues 40–60 (RSKTESRLAKGGQMNGRETNM) is disordered. LIM zinc-binding domains lie at 69 to 130 (ALCA…RFSV) and 131 to 193 (QRCA…LLQG). Residues 267 to 326 (TKRMATSFKHHQLRTMKSYFAINHNPDAKDLKQLAQKTGLTKRVLQVWFQNARAKFRRNL) constitute a DNA-binding region (homeobox). Disordered regions lie at residues 330 to 363 (ENGG…TTLT) and 378 to 397 (SNLD…TNLF). Positions 353 to 363 (LTPPGTATTLT) are enriched in low complexity. Over residues 387-397 (SPSQTTLTNLF) the composition is skewed to polar residues.

It is found in the nucleus. Its function is as follows. May be involved in gonadal development. The polypeptide is LIM/homeobox protein Lhx9 (LHX9) (Gallus gallus (Chicken)).